The primary structure comprises 211 residues: Claudin-7 (211 aa).

Residues 1 to 7 (MANSGLQ) are Cytoplasmic-facing. Residues 8–28 (LLGFSMAMLGWVGLIASTAIP) traverse the membrane as a helical segment. The Extracellular portion of the chain corresponds to 29-81 (QWQMSSYAGDNIITAQAMYKGLWMECVTQSTGMMSCKMYDSVLALPAATQATR). The chain crosses the membrane as a helical span at residues 82–102 (ALMIVSLVLGFLAMFVATMGM). The Cytoplasmic portion of the chain corresponds to 103-119 (KCTRCGGDDKVKKARIA). A helical transmembrane segment spans residues 120 to 140 (MTGGIIFIVAGLAALVACSWI). Residues 141–160 (GHQIVTDFYNPLTPMNIKYE) are Extracellular-facing. A helical transmembrane segment spans residues 161-181 (FGPAIFIGWAGSALVLLGGAL). Residues 182 to 211 (LSCSCPGSESKAAYRAPRSYPKSNSSKEYV) are Cytoplasmic-facing. The tract at residues 210-211 (YV) is interactions with TJP1, TJP2 and TJP3.

The protein belongs to the claudin family. In terms of assembly, directly interacts with TJP1/ZO-1, TJP2/ZO-2 and TJP3/ZO-3. The phosphorylated form interacts with EPCAM. Phosphorylated.

Its subcellular location is the cell membrane. It is found in the basolateral cell membrane. The protein localises to the cell junction. The protein resides in the tight junction. Functionally, plays a major role in tight junction-specific obliteration of the intercellular space. The sequence is that of Claudin-7 (Cldn7) from Rattus norvegicus (Rat).